A 250-amino-acid polypeptide reads, in one-letter code: Isoprenyl transferase (250 aa).

Asp-27 is an active-site residue. Asp-27 provides a ligand contact to Mg(2+). Substrate contacts are provided by residues 28-31 (GNRR), Trp-32, His-48, and 76-78 (STE). Residue Asn-79 is the Proton acceptor of the active site. Residues Phe-80, Arg-82, Arg-199, and 205–207 (RVS) each bind substrate. Glu-218 lines the Mg(2+) pocket.

It belongs to the UPP synthase family. Homodimer. The cofactor is Mg(2+).

Functionally, catalyzes the condensation of isopentenyl diphosphate (IPP) with allylic pyrophosphates generating different type of terpenoids. This Chlamydia abortus (strain DSM 27085 / S26/3) (Chlamydophila abortus) protein is Isoprenyl transferase.